Consider the following 658-residue polypeptide: Biosynthetic arginine decarboxylase (658 aa).

Lys-127 carries the post-translational modification N6-(pyridoxal phosphate)lysine. 307-317 (FDVGGGLGVDY) contacts substrate.

This sequence belongs to the Orn/Lys/Arg decarboxylase class-II family. SpeA subfamily. Homotetramer. Requires Mg(2+) as cofactor. Pyridoxal 5'-phosphate is required as a cofactor.

The protein localises to the periplasm. The catalysed reaction is L-arginine + H(+) = agmatine + CO2. Its pathway is amine and polyamine biosynthesis; agmatine biosynthesis; agmatine from L-arginine: step 1/1. In terms of biological role, catalyzes the biosynthesis of agmatine from arginine. The protein is Biosynthetic arginine decarboxylase (speA) of Escherichia coli O157:H7.